A 310-amino-acid chain; its full sequence is p-hydroxybenzoic acid efflux pump subunit AaeA (310 aa).

Residues 12–32 (AITLVLVILAFIAIFRAWVYY) form a helical membrane-spanning segment.

It belongs to the membrane fusion protein (MFP) (TC 8.A.1) family.

The protein localises to the cell inner membrane. In terms of biological role, forms an efflux pump with AaeB. This chain is p-hydroxybenzoic acid efflux pump subunit AaeA, found in Escherichia fergusonii (strain ATCC 35469 / DSM 13698 / CCUG 18766 / IAM 14443 / JCM 21226 / LMG 7866 / NBRC 102419 / NCTC 12128 / CDC 0568-73).